The primary structure comprises 194 residues: Ribonuclease HII (194 aa).

In terms of domain architecture, RNase H type-2 spans 3-193 (ILTAGVDEAG…VRNLLAQQTL (191 aa)). A divalent metal cation is bound by residues D9, E10, and D101.

Belongs to the RNase HII family. Mn(2+) serves as cofactor. Mg(2+) is required as a cofactor.

Its subcellular location is the cytoplasm. The enzyme catalyses Endonucleolytic cleavage to 5'-phosphomonoester.. Functionally, endonuclease that specifically degrades the RNA of RNA-DNA hybrids. The sequence is that of Ribonuclease HII from Neisseria meningitidis serogroup C (strain 053442).